The chain runs to 108 residues: Resistin (108 aa).

A signal peptide spans 1 to 18 (MKALCLLLLPVLGLLVSS). 5 disulfides stabilise this stretch: Cys-51/Cys-104, Cys-63/Cys-103, Cys-72/Cys-89, Cys-74/Cys-91, and Cys-78/Cys-93.

This sequence belongs to the resistin/FIZZ family. As to quaternary structure, homodimer; disulfide-linked. Interacts with DEFA1. In terms of tissue distribution, expressed in white adipose tissue (at protein level). Widely expressed, with particularly strong expression in lung, bone marrow, breast and peripheral blood. Expressed strongly in bone marrow and at lower levels in lung, but not detected in other tissues. Isoform 2 is detected in adipose tissue, bone marrow, brain, lung, peripheral blood, placenta and thymus.

Its subcellular location is the secreted. Its function is as follows. Hormone that seems to suppress insulin ability to stimulate glucose uptake into adipose cells. Potentially links obesity to diabetes. Promotes chemotaxis in myeloid cells. The polypeptide is Resistin (RETN) (Homo sapiens (Human)).